Consider the following 206-residue polypeptide: Uridine kinase (206 aa).

11–18 contacts ATP; sequence GGSASGKT.

It belongs to the uridine kinase family.

It localises to the cytoplasm. It carries out the reaction uridine + ATP = UMP + ADP + H(+). The enzyme catalyses cytidine + ATP = CMP + ADP + H(+). The protein operates within pyrimidine metabolism; CTP biosynthesis via salvage pathway; CTP from cytidine: step 1/3. It functions in the pathway pyrimidine metabolism; UMP biosynthesis via salvage pathway; UMP from uridine: step 1/1. In Lactococcus lactis subsp. lactis (strain IL1403) (Streptococcus lactis), this protein is Uridine kinase.